A 479-amino-acid polypeptide reads, in one-letter code: Alliin lyase (479 aa).

The N-terminal stretch at 1 to 25 is a signal peptide; it reads MESYDKVGSNKVPCLLILTCIIMSS. Positions 26–34 are excised as a propeptide; that stretch reads FVNNNIVQA. The EGF-like; atypical domain maps to 47–93; it reads EAVANINCSGHGRAFLDGILSDGSPKCECNTCYTGADCSEKITGCSA. N53 carries an N-linked (GlcNAc...) asparagine glycan. 3 disulfides stabilise this stretch: C54–C73, C75–C84, and C78–C91. 126–134 contributes to the chloride binding site; sequence YFFNPVSNF. Residues N180 and N225 are each glycosylated (N-linked (GlcNAc...) asparagine). At K285 the chain carries N6-(pyridoxal phosphate)lysine. Residues N342 and N362 are each glycosylated (N-linked (GlcNAc...) asparagine). A disulfide bridge links C402 with C410.

It belongs to the alliinase family. Homodimer. The cofactor is pyridoxal 5'-phosphate.

Its subcellular location is the vacuole. It catalyses the reaction an S-alkyl-L-cysteine S-oxide = an S-alkyl sulfenate + 2-aminoprop-2-enoate. This chain is Alliin lyase, found in Allium cepa (Onion).